Reading from the N-terminus, the 144-residue chain is Deoxyuridine 5'-triphosphate nucleotidohydrolase (144 aa).

DUMP contacts are provided by Ser66, Gly79, Asp82, Tyr85, Lys90, Arg134, Phe139, and Gly140.

It belongs to the dUTPase family. Homotrimer. Requires Mg(2+) as cofactor.

The enzyme catalyses dUTP + H2O = dUMP + diphosphate + H(+). Its pathway is pyrimidine metabolism; dUMP biosynthesis; dUMP from dCTP (dUTP route): step 2/2. In terms of biological role, involved in nucleotide metabolism via production of dUMP, the immediate precursor of thymidine nucleotides, and decreases the intracellular concentration of dUTP so that uracil cannot be incorporated into DNA. The polypeptide is Deoxyuridine 5'-triphosphate nucleotidohydrolase (DUT1) (Candida glabrata (strain ATCC 2001 / BCRC 20586 / JCM 3761 / NBRC 0622 / NRRL Y-65 / CBS 138) (Yeast)).